A 247-amino-acid polypeptide reads, in one-letter code: Mitochondrial inner membrane protease ATP23 (247 aa).

Histidine 146 provides a ligand contact to a divalent metal cation. The active site involves glutamate 147. Histidine 150 contacts a divalent metal cation.

Belongs to the peptidase M76 family.

It localises to the mitochondrion inner membrane. Has a dual role in the assembly of mitochondrial ATPase. Acts as a protease that removes N-terminal residues of mitochondrial ATPase CF(0) subunit 6 at the intermembrane space side. Also involved in the correct assembly of the membrane-embedded ATPase CF(0) particle, probably mediating association of subunit 6 with the subunit 9 ring. This Eremothecium gossypii (strain ATCC 10895 / CBS 109.51 / FGSC 9923 / NRRL Y-1056) (Yeast) protein is Mitochondrial inner membrane protease ATP23 (ATP23).